Consider the following 182-residue polypeptide: ATP-dependent protease subunit HslV (182 aa).

Residue Thr12 is part of the active site. Ala167, Cys170, and Thr173 together coordinate Na(+).

This sequence belongs to the peptidase T1B family. HslV subfamily. A double ring-shaped homohexamer of HslV is capped on each side by a ring-shaped HslU homohexamer. The assembly of the HslU/HslV complex is dependent on binding of ATP.

It localises to the cytoplasm. The enzyme catalyses ATP-dependent cleavage of peptide bonds with broad specificity.. Its activity is regulated as follows. Allosterically activated by HslU binding. In terms of biological role, protease subunit of a proteasome-like degradation complex believed to be a general protein degrading machinery. This Paramagnetospirillum magneticum (strain ATCC 700264 / AMB-1) (Magnetospirillum magneticum) protein is ATP-dependent protease subunit HslV.